The sequence spans 529 residues: Ribonuclease Y (529 aa).

A helical membrane pass occupies residues 4 to 24 (GLIYISLEVIVACLISALAMY). In terms of domain architecture, KH spans 216–297 (FTNRIALPCS…NRIEEVYHRV (82 aa)). The region spanning 342–435 (ALQHSKEVAL…VCAADALSAG (94 aa)) is the HD domain.

The protein belongs to the RNase Y family.

The protein resides in the cell membrane. Functionally, endoribonuclease that initiates mRNA decay. The chain is Ribonuclease Y from Helicobacter acinonychis (strain Sheeba).